Reading from the N-terminus, the 298-residue chain is Putative olfactory receptor 10D4 (298 aa).

The Extracellular portion of the chain corresponds to 1 to 23 (MRNHTMVTEFILLGIPETEGLET). N-linked (GlcNAc...) asparagine glycosylation occurs at asparagine 3. A helical transmembrane segment spans residues 24-44 (ALLFLFSSFYLCTLLGNVLIL). Residues 45–52 (TAIISSTR) lie on the Cytoplasmic side of the membrane. A helical transmembrane segment spans residues 53 to 73 (LHTPMYFFLGNLSIFDLGFSS). Residues 74–97 (TTVPKMLFYLSGNSHAISYAGCVS) are Extracellular-facing. Cysteine 95 and cysteine 187 are oxidised to a cystine. A helical membrane pass occupies residues 98–118 (QLFFYHFLGCTECFLYTVMAC). Over 119–137 (DRFVAICFPLRYTVIMNHR) the chain is Cytoplasmic. The chain crosses the membrane as a helical span at residues 138–158 (VCFMLATGTWMIGCVHAMILT). At 159-195 (PLTFQLPYCGPNKVGYYFCDIPAVLPLACKDTSLAQR) the chain is on the extracellular side. Residues 196–215 (VGFTNVGLLSLICFFLILVS) form a helical membrane-spanning segment. Topologically, residues 216-235 (YTCIGISISKIRSAEGRQRA) are cytoplasmic. Residues 236–256 (FSTCSAHLTAILCAYGPVIVI) traverse the membrane as a helical segment. At 257–267 (YLQPNPSALLG) the chain is on the extracellular side. A helical transmembrane segment spans residues 268-288 (SIIQILNNLVTPMLNPLIYSL). At 289–298 (RNKDVKSDQP) the chain is on the cytoplasmic side.

The protein belongs to the G-protein coupled receptor 1 family.

Its subcellular location is the cell membrane. Functionally, odorant receptor. The protein is Putative olfactory receptor 10D4 (OR10D4P) of Homo sapiens (Human).